The primary structure comprises 365 residues: Glucan endo-1,3-beta-glucosidase, basic vacuolar isoform (365 aa).

The first 32 residues, 1–32 (MSTLHKHNTPQMAAITLLGLLLVASSIEIAGA), serve as a signal peptide directing secretion. Residue Glu128 is the Proton donor of the active site. Residue Glu273 is the Nucleophile of the active site. A propeptide spans 349 to 365 (VSGSVETNATASLISEI) (removed in mature form). N-linked (GlcNAc...) asparagine glycosylation occurs at Asn356.

Belongs to the glycosyl hydrolase 17 family.

It localises to the vacuole. The enzyme catalyses Hydrolysis of (1-&gt;3)-beta-D-glucosidic linkages in (1-&gt;3)-beta-D-glucans.. In terms of biological role, implicated in the defense of plants against pathogens. The chain is Glucan endo-1,3-beta-glucosidase, basic vacuolar isoform (GN2) from Nicotiana plumbaginifolia (Leadwort-leaved tobacco).